Reading from the N-terminus, the 244-residue chain is Salivary gland SP38-40.A protein (244 aa).

The first 21 residues, 1 to 21 (MRIKFLVVLAVICLFAHYASA), serve as a signal peptide directing secretion. Disordered regions lie at residues 23-91 (GMGG…EKKQ), 137-169 (PPPG…LRKE), and 206-244 (VQGK…DAKK). Composition is skewed to basic and acidic residues over residues 26-86 (GDKK…EVKK) and 157-169 (PPKE…LRKE). Repeat copies occupy residues 29 to 34 (KPKDAP) and 35 to 40 (KPKDAP). The tract at residues 29–47 (KPKDAPKPKDAPKPKEVKP) is 3 X 6 AA approximate tandem repeats of K-P-K-D-A-P. The stretch at 41 to 47 (KPKEVKP) is one 1-3; approximate repeat. Repeat copies occupy residues 156–159 (KPPK) and 161–164 (KPPK). Residues 156–168 (KPPKEKPPKKLRK) are 3 X 4 AA approximate tandem repeats of K-P-P-K. Residues 165-168 (KLRK) form a 2-3; approximate repeat. Basic residues predominate over residues 209–224 (KQKKGAKKAKGGKKAA). Tandem repeats lie at residues 225–228 (PKPG), 229–232 (PKPG), and 233–236 (PKQA). The segment at 225-240 (PKPGPKPGPKQADKPK) is 4 X 4 AA approximate tandem repeats of P-K-[PQ]-[GA]. Residues 235–244 (QADKPKDAKK) show a composition bias toward basic and acidic residues. The 3-4; approximate repeat unit spans residues 237 to 240 (DKPK).

In terms of tissue distribution, salivary gland.

It localises to the secreted. Functionally, used by the larvae to construct a supramolecular structure, the larval tube. The polypeptide is Salivary gland SP38-40.A protein (SP38-40.A) (Chironomus tentans (Midge)).